The chain runs to 416 residues: D-amino acid dehydrogenase 2 (416 aa).

Residue 3–17 (ITVLGAGVVGTAAAY) participates in FAD binding.

Belongs to the DadA oxidoreductase family. FAD serves as cofactor.

The enzyme catalyses a D-alpha-amino acid + A + H2O = a 2-oxocarboxylate + AH2 + NH4(+). Oxidative deamination of D-amino acids. The protein is D-amino acid dehydrogenase 2 (dadA2) of Mesorhizobium japonicum (strain LMG 29417 / CECT 9101 / MAFF 303099) (Mesorhizobium loti (strain MAFF 303099)).